A 215-amino-acid chain; its full sequence is Cytochrome b6 (215 aa).

A helical membrane pass occupies residues 32–52 (LFYCLGGITLTCFLIQVATGF). Cys35 contacts heme c. Heme b-binding residues include His86 and His100. The next 3 membrane-spanning stretches (helical) occupy residues 90–110 (ASMM…TGGF), 116–136 (STWV…VTGY), and 186–206 (LHTF…FLMI). Residues His187 and His202 each coordinate heme b.

The protein belongs to the cytochrome b family. PetB subfamily. As to quaternary structure, the 4 large subunits of the cytochrome b6-f complex are cytochrome b6, subunit IV (17 kDa polypeptide, PetD), cytochrome f and the Rieske protein, while the 4 small subunits are PetG, PetL, PetM and PetN. The complex functions as a dimer. Requires heme b as cofactor. Heme c serves as cofactor.

The protein resides in the plastid. It is found in the chloroplast thylakoid membrane. Component of the cytochrome b6-f complex, which mediates electron transfer between photosystem II (PSII) and photosystem I (PSI), cyclic electron flow around PSI, and state transitions. The sequence is that of Cytochrome b6 from Bigelowiella natans (Pedinomonas minutissima).